Here is a 102-residue protein sequence, read N- to C-terminus: Large ribosomal subunit protein bL21 (102 aa).

Belongs to the bacterial ribosomal protein bL21 family. As to quaternary structure, part of the 50S ribosomal subunit. Contacts protein L20.

Its function is as follows. This protein binds to 23S rRNA in the presence of protein L20. The protein is Large ribosomal subunit protein bL21 of Oleidesulfovibrio alaskensis (strain ATCC BAA-1058 / DSM 17464 / G20) (Desulfovibrio alaskensis).